The following is a 760-amino-acid chain: Pentatricopeptide repeat-containing protein At1g20230 (760 aa).

PPR repeat units follow at residues Asp49 to Pro79, Thr80 to Pro114, Asp115 to Met149, Asp150 to Lys180, Asp181 to Ala215, Asn216 to Pro250, Asp251 to Lys285, Asp286 to Met316, Glu317 to Leu351, Asn352 to Pro386, Asn387 to Asp421, Asn422 to Lys452, Asn453 to Pro487, Asp488 to Pro523, and Arg524 to Glu554. The interval Val559–Lys634 is type E motif. The tract at residues Asn635 to Arg665 is type E(+) motif. The interval Lys666 to Trp760 is type DYW motif.

This sequence belongs to the PPR family. PCMP-H subfamily.

In Arabidopsis thaliana (Mouse-ear cress), this protein is Pentatricopeptide repeat-containing protein At1g20230 (PCMP-H21).